The chain runs to 288 residues: Beta-lactamase PSE-4 (288 aa).

The first 17 residues, 1–17 (MKFLLAFSLLIPSVVFA), serve as a signal peptide directing secretion. The Acyl-ester intermediate role is filled by S65. Cysteines 72 and 118 form a disulfide. 229–231 (RSG) contributes to the substrate binding site.

Belongs to the class-A beta-lactamase family.

It carries out the reaction a beta-lactam + H2O = a substituted beta-amino acid. Functionally, hydrolyzes both carbenicillin and oxacillin. The chain is Beta-lactamase PSE-4 (pse4) from Pseudomonas aeruginosa.